Consider the following 541-residue polypeptide: 1'-carboxy-chondrochloren decarboxylase (541 aa).

Residues 39–226 form the FAD-binding PCMH-type domain; that stretch reads TTHRIPAIIS…TRMTIWLAPR (188 aa).

It carries out the reaction 1'-carboxy-chondrochloren A + FAD + 2 H(+) = chondrochloren A + FADH2 + CO2. It catalyses the reaction 1'-carboxy-chondrochloren B + FAD + 2 H(+) = chondrochloren B + FADH2 + CO2. It participates in antibiotic biosynthesis. With respect to regulation, activity is not affected by the addition of EDTA or/and EGTA chelators or in the presence of external metals like Zn(2+), Mg(2+), Mn(2+) and Fe(2+). Activity is inhibited under low oxygen conditions. Oxidative decarboxylase involved in the biosynthesis of the antibiotics chondrochloren A and chondrochloren B. Catalyzes the decarboxylation of biologically inactive pre-chondrochloren A and pre-chondrochloren B to yield mature chondrochloren A and chondrochloren B, respectively. Cannot decarboxylate free L-tyrosine, 3-chloro-tyrosine or a number of chlorinated and non-chlorinated analog substrates containing variable N-acyl chains. This is 1'-carboxy-chondrochloren decarboxylase from Chondromyces crocatus.